The chain runs to 110 residues: Single-stranded DNA-binding protein 1 (110 aa).

The 104-residue stretch at 1–104 (MNKILLIGRM…VVGEEVQFLE (104 aa)) folds into the SSB domain.

As to quaternary structure, homotetramer.

The polypeptide is Single-stranded DNA-binding protein 1 (ssb1) (Clostridium acetobutylicum (strain ATCC 824 / DSM 792 / JCM 1419 / IAM 19013 / LMG 5710 / NBRC 13948 / NRRL B-527 / VKM B-1787 / 2291 / W)).